Reading from the N-terminus, the 275-residue chain is Phosphonoacetaldehyde hydrolase (275 aa).

Catalysis depends on D15, which acts as the Nucleophile. Residues D15 and A17 each coordinate Mg(2+). K56 (schiff-base intermediate with substrate) is an active-site residue. Mg(2+) is bound at residue D189.

This sequence belongs to the HAD-like hydrolase superfamily. PhnX family. As to quaternary structure, homodimer. Requires Mg(2+) as cofactor.

It catalyses the reaction phosphonoacetaldehyde + H2O = acetaldehyde + phosphate + H(+). Its function is as follows. Involved in phosphonate degradation. In Pseudomonas putida (strain ATCC 700007 / DSM 6899 / JCM 31910 / BCRC 17059 / LMG 24140 / F1), this protein is Phosphonoacetaldehyde hydrolase.